The following is a 189-amino-acid chain: Elongation factor P (189 aa).

K34 carries the N6-(3,6-diaminohexanoyl)-5-hydroxylysine modification.

This sequence belongs to the elongation factor P family. Post-translationally, may be beta-lysylated on the epsilon-amino group of Lys-34 by the combined action of EpmA and EpmB, and then hydroxylated on the C5 position of the same residue by EpmC (if this protein is present). Lysylation is critical for the stimulatory effect of EF-P on peptide-bond formation. The lysylation moiety may extend toward the peptidyltransferase center and stabilize the terminal 3-CCA end of the tRNA. Hydroxylation of the C5 position on Lys-34 may allow additional potential stabilizing hydrogen-bond interactions with the P-tRNA.

It localises to the cytoplasm. It participates in protein biosynthesis; polypeptide chain elongation. Its function is as follows. Involved in peptide bond synthesis. Alleviates ribosome stalling that occurs when 3 or more consecutive Pro residues or the sequence PPG is present in a protein, possibly by augmenting the peptidyl transferase activity of the ribosome. Modification of Lys-34 is required for alleviation. The polypeptide is Elongation factor P (Buchnera aphidicola subsp. Acyrthosiphon pisum (strain APS) (Acyrthosiphon pisum symbiotic bacterium)).